We begin with the raw amino-acid sequence, 274 residues long: 3-methyl-2-oxobutanoate hydroxymethyltransferase (274 aa).

Residues Asp49 and Asp88 each coordinate Mg(2+). 3-methyl-2-oxobutanoate is bound by residues Asp49 to Ser50, Asp88, and Lys118. Glu120 provides a ligand contact to Mg(2+). Catalysis depends on Glu187, which acts as the Proton acceptor.

Belongs to the PanB family. As to quaternary structure, homodecamer; pentamer of dimers. Requires Mg(2+) as cofactor.

It is found in the cytoplasm. It carries out the reaction 3-methyl-2-oxobutanoate + (6R)-5,10-methylene-5,6,7,8-tetrahydrofolate + H2O = 2-dehydropantoate + (6S)-5,6,7,8-tetrahydrofolate. The protein operates within cofactor biosynthesis; (R)-pantothenate biosynthesis; (R)-pantoate from 3-methyl-2-oxobutanoate: step 1/2. In terms of biological role, catalyzes the reversible reaction in which hydroxymethyl group from 5,10-methylenetetrahydrofolate is transferred onto alpha-ketoisovalerate to form ketopantoate. This Rhodopseudomonas palustris (strain HaA2) protein is 3-methyl-2-oxobutanoate hydroxymethyltransferase.